The chain runs to 1499 residues: MSTANTSLSQQLDEKPWVDASDNSSVQEYQGFDATASHNIQDLARKLTHGSTNGDHHSANDLARYLSHMSDIPGVSPFNGNISHEQLDPDSENFNAKYWVKNLKKLFESDSDYYKPSKLGVAYRNLRAYGIANDSDYQPTVTNALWKFTTEAINKLKKPDDSKYFDILKSMDAIMRPGELTVVLGRPGAGCSTLLKTIAVNTYGFHIGKESQITYDGLSPHDIERHYRGDVIYSAETDVHFPHLSVGDTLEFAARLRTPQNRGEGIDRETYAKHMASVYMATYGLSHTRNTNVGNDFVRGVSGGERKRVSIAEASLSGANIQCWDNATRGLDSATALEFIRALKTSATILDTTPLIAIYQCSQDAYELFDNVVVLYEGYQIFFGKASKAKEYFENMGWKCPQRQTTADFLTSLTNPAEREPLPGYEDKVPRTAQEFETFWKNSPEYAELTKEIDEYFVECERSNTGETYRESHVAKQSNNTRPSSPYTVSFFMQVRYVIARNFLRMKGDPSIPLISILSQLVMGLILASVFFNLRKSTDTFYFRGGALFFSVLFNAFSSLLEILSLYEARPIVEKHRKYALYRPSADALASIISELPVKLLMTMSFNIVYYFMVNLRRTAGNFFFYWLMCASCTLVMSHMFRSIGAVTTTIATAMSLSTVFLLAMIIYAGFVLPIPYILGWSRWIRYINPVTYIFESLMVNEFHGREFECGQYIPSGPGFENLPVENKVCTTVGSTPGSTVVQGTEYIKLAYQFYSSHKWRNFGITVAFAVFFLGVYVALTEFNKGAMQKGEIVLFLKGSLKKHKRKTAASNKGDIEAGPVAGKLDYQDEAEAVNNEKFTEKGSTGSVDFPENREIFFWRDLTYQVKIKKEDRVILDHVDGWVKPGQITALMGASGAGKTTLLNCLSERVTTGIITDGERLVNGHALDSSFQRSIGYVQQQDVHLETTTVREALQFSAYLRQSNKISKKEKDDYVDYVIDLLEMTDYADALVGVAGEGLNVEQRKRLTIGVELVAKPKLLLFLDEPTSGLDSQTAWSICKLMRKLADHGQAILCTIHQPSALIMAEFDKLLFLQKGGRTAYFGELGENCQTMINYFEKYGADPCPKEANPAEWMLQVVGAAPGSHAKQDYFEVWRNSSEYQAVREEINRMEAELSKLPRDNDPEALLKYAAPLWKQYLLVSWRTIVQDWRSPGYIYSKLILVISSSLFIGFSFFKSKNNLQGLQSQMLAVFMFFVPFTTFIDQMLPYFVKHRAVYEVREAPSRTFSWFAFIAGQITSEIPFQIVVGTISYFCWYYPVGLYANAEPTDSVNSRGVLMWMLLTAFYVYTSTMGQLAISLNELIDNAANLATTLFTLCLMFCGVLAGPNVIPGFWIFMYRCNPFTYLIQAILSTGLANAKVTCAPRELVTLKPPMGETCSSFIGPYTEAAGGYFSTNSDGTCSVCRIDSTNQFLESINALFSQRWRNFGIFVAFIGINIILTIFFYWLARVPKGNREKKMKK.

Residues 1–511 lie on the Cytoplasmic side of the membrane; that stretch reads MSTANTSLSQ…NFLRMKGDPS (511 aa). The region spanning 148–402 is the ABC transporter 1 domain; that stretch reads FTTEAINKLK…FENMGWKCPQ (255 aa). The next 6 membrane-spanning stretches (helical) occupy residues 512–532, 546–566, 596–616, 621–641, 660–680, and 763–783; these read IPLI…SVFF, GALF…ILSL, LPVK…MVNL, GNFF…SHMF, VFLL…YILG, and FGIT…LTEF. The Cytoplasmic segment spans residues 784 to 1193; sequence NKGAMQKGEI…TIVQDWRSPG (410 aa). An ABC transporter 2 domain is found at 857 to 1101; sequence FFWRDLTYQV…MINYFEKYGA (245 aa). ATP is bound at residue 893–900; that stretch reads GASGAGKT. 6 consecutive transmembrane segments (helical) span residues 1194–1214, 1229–1249, 1279–1299, 1315–1335, 1354–1374, and 1465–1485; these read YIYS…FSFF, AVFM…PYFV, IPFQ…PVGL, LMWM…QLAI, LCLM…FWIF, and FGIF…FYWL.

It belongs to the ABC transporter superfamily. ABCG family. PDR (TC 3.A.1.205) subfamily.

The protein resides in the membrane. Functionally, multidrug efflux transporter. Confers resistance to azole antifungal agents, to other antifungals (terbinafine, amorolfine) and to a variety of metabolic inhibitors. This Candida albicans (strain SC5314 / ATCC MYA-2876) (Yeast) protein is Multidrug resistance protein CDR2 (CDR2).